The following is a 645-amino-acid chain: MTSRPITPLLDTIRGPSDTRGLSVAQLEQLAREVRAEMIDAVSVTGGHLGSGLGVVELTVALHHVFDTPDDRIIWDVGHQCYPHKILTGRRDRIRTLRQGGGLSGFTLREESPYDPFGAGHSSTSISAGLGMAIGSALAGDARDVVAVIGDGSMSAGMAYEAMNNAGAAKSRLIVILNDNDMSIAPPVGAMSAYLSRLLSSKSWLSIRTLAKEIVARLPDALERTAKRAEEYARGMVTGGGTLFEELGFYYVGPIDGHRMDHLVPVLRNVREAGRDGPVLIHVVTQKGKGYAPAENAPDKYHGVSRFNVVTGVQEKAKPQAPSYTAVFGKQLVAAAAKDHRIVGVTAAMPGGTGLDKLATAYPQRCFDVGIAEQHAVTFAAGLACEGLKPFVALYSSFLQRGYDQVVHDVVLQKLPVRFAIDRAGFVGADGATHGGVFDMAFLGCLPNLVVMCAADEAELARMVVTAAGHDSGPIALRYPRGEGVGVEIPEDPQPLAIGKGRIVREGKGVALLSIGTRLQSCLEACEILAARGLTPTVADARFLKPFDEELVADLAARHEVLIVVEEGAIGGFGAHVATWLTNQGLLDGGLKLRALHIPDRFFEHDAPEVQCAKAGIDAQAITTAVLDALKLETSATIDAGALKA.

Thiamine diphosphate is bound by residues His79 and 120–122; that span reads GHS. Position 151 (Asp151) interacts with Mg(2+). Thiamine diphosphate contacts are provided by residues 152 to 153, Asn180, Tyr291, and Glu373; that span reads GS. Asn180 contributes to the Mg(2+) binding site.

This sequence belongs to the transketolase family. DXPS subfamily. In terms of assembly, homodimer. Requires Mg(2+) as cofactor. It depends on thiamine diphosphate as a cofactor.

It catalyses the reaction D-glyceraldehyde 3-phosphate + pyruvate + H(+) = 1-deoxy-D-xylulose 5-phosphate + CO2. Its pathway is metabolic intermediate biosynthesis; 1-deoxy-D-xylulose 5-phosphate biosynthesis; 1-deoxy-D-xylulose 5-phosphate from D-glyceraldehyde 3-phosphate and pyruvate: step 1/1. Catalyzes the acyloin condensation reaction between C atoms 2 and 3 of pyruvate and glyceraldehyde 3-phosphate to yield 1-deoxy-D-xylulose-5-phosphate (DXP). The polypeptide is 1-deoxy-D-xylulose-5-phosphate synthase 1 (Rhodospirillum rubrum (strain ATCC 11170 / ATH 1.1.1 / DSM 467 / LMG 4362 / NCIMB 8255 / S1)).